The primary structure comprises 2169 residues: Voltage-dependent L-type calcium channel subunit alpha-1C (2169 aa).

Residues 1–154 are Cytoplasmic-facing; sequence MIRAFAQPST…RACISIVEWK (154 aa). Residues 77–98 are calmodulin-binding; the sequence is GAALSWLAAIDAARQAKLMGSA. Residues 104 to 128 form a disordered region; that stretch reads STVSSTQRKRQQYGKPKKQGGTTAT. Positions 110 to 121 are enriched in basic residues; the sequence is QRKRQQYGKPKK. An I repeat occupies 141-438; it reads NPIRRACISI…LVLGVLSGEF (298 aa). The chain crosses the membrane as a helical span at residues 155 to 173; sequence PFEIIILLTIFANCVALAI. Over 174 to 188 the chain is Extracellular; the sequence is YIPFPEDDSNATNSN. The N-linked (GlcNAc...) asparagine glycan is linked to Asn-183. Residues 189–209 traverse the membrane as a helical segment; it reads LERVEYLFLIIFTVEAFLKVI. Topologically, residues 210-218 are cytoplasmic; that stretch reads AYGLLFHPN. The chain crosses the membrane as a helical span at residues 219–239; it reads AYLRNGWNLLDFIIVVVGLFS. Over 240 to 262 the chain is Extracellular; that stretch reads AILEQATKADGANALGGKGAGFD. The chain crosses the membrane as a helical span at residues 263–281; the sequence is VKALRAFRVLRPLRLVSGV. Over 282–298 the chain is Cytoplasmic; sequence PSLQVVLNSIIKAMVPL. The chain crosses the membrane as a helical span at residues 299–320; it reads LHIALLVLFVIIIYAIIGLELF. Over 321–380 the chain is Extracellular; sequence MGKMHKTCYNQEGIIDVPAEEDPSPCALETGHGRQCQNGTVCKPGWDGPKHGITNFDNFA. 2 disulfide bridges follow: Cys-328/Cys-356 and Cys-346/Cys-362. N-linked (GlcNAc...) asparagine glycosylation is present at Asn-358. Positions 381 to 402 form an intramembrane region, pore-forming; that stretch reads FAMLTVFQCITMEGWTDVLYWM. A Selectivity filter of repeat I motif is present at residues 391 to 394; the sequence is TMEG. Glu-393 contacts Ca(2+). Residues 403–410 lie on the Extracellular side of the membrane; that stretch reads QDAMGYEL. The helical transmembrane segment at 411-431 threads the bilayer; it reads PWVYFVSLVIFGSFFVLNLVL. Over 432 to 554 the chain is Cytoplasmic; that stretch reads GVLSGEFSKE…RKCRAAVKSN (123 aa). Residues 458 to 475 are AID/alpha-interaction domain; mediates interaction with the beta subunit; it reads QQLEEDLKGYLDWITQAE. The tract at residues 479-511 is disordered; the sequence is PENEDEGMDEDKPRNMSMPTSETESVNTENVAG. Over residues 495-508 the composition is skewed to polar residues; that stretch reads SMPTSETESVNTEN. Phosphoserine is present on Ser-499. Residue Thr-506 is modified to Phosphothreonine. The stretch at 540-786 is one II repeat; sequence NRFCRRKCRA…LFLAIAVDNL (247 aa). A helical membrane pass occupies residues 555–573; that stretch reads VFYWLVIFLVFLNTLTIAS. Residues 574–584 lie on the Extracellular side of the membrane; the sequence is EHYNQPHWLTE. The helical transmembrane segment at 585–605 threads the bilayer; sequence VQDTANKALLALFTAEMLLKM. The Cytoplasmic portion of the chain corresponds to 606 to 616; the sequence is YSLGLQAYFVS. A helical membrane pass occupies residues 617 to 636; that stretch reads LFNRFDCFIVCGGILETILV. The Extracellular portion of the chain corresponds to 637–645; the sequence is ETKIMSPLG. The helical transmembrane segment at 646 to 664 threads the bilayer; it reads ISCWRCVRLLRIFKITRYW. Topologically, residues 665-683 are cytoplasmic; that stretch reads NSLSNLVASLLNSLRSIAS. The helical transmembrane segment at 684–703 threads the bilayer; it reads LLLLLFLFIIIFSLLGMQLF. Residues 704-723 lie on the Extracellular side of the membrane; that stretch reads GGKFNFDEMQTRRSTFDNFP. The pore-forming intramembrane region spans 724–745; it reads QSLLTVFQILTGEDWNSVMYDG. Positions 734 to 737 match the Selectivity filter of repeat II motif; it reads TGED. Glu-736 contacts Ca(2+). At 746–755 the chain is on the extracellular side; sequence IMAYGGPSFP. The chain crosses the membrane as a helical span at residues 756 to 775; sequence GMLVCIYFIILFISPNYILL. Over 776–930 the chain is Cytoplasmic; that stretch reads NLFLAIAVDN…LQCHRIVNDT (155 aa). Residues 794–891 form a disordered region; it reads SAQKEEEEEK…EMPVGPRPRP (98 aa). A compositionally biased stretch (basic and acidic residues) spans 813-836; sequence SPEKKQEVMEKPAVEESKEEKIEL. Phosphoserine occurs at positions 838 and 845. Residues 859-906 are interaction with STAC2; it reads SENEDKSPHSNPDTAGEEDEEEPEMPVGPRPRPLSELHLKEKAVPMPE. Positions 873–882 are enriched in acidic residues; that stretch reads AGEEDEEEPE. An III repeat occupies 917 to 1198; that stretch reads NRFRLQCHRI…IFVGFVIVTF (282 aa). Residues 931–949 traverse the membrane as a helical segment; sequence IFTNLILFFILLSSISLAA. Over 950–961 the chain is Extracellular; that stretch reads EDPVQHTSFRNH. The helical transmembrane segment at 962 to 981 threads the bilayer; sequence ILFYFDIVFTTIFTIEIALK. Residues 982-997 lie on the Cytoplasmic side of the membrane; that stretch reads MTAYGAFLHKGSFCRN. Residues 998-1016 traverse the membrane as a helical segment; that stretch reads YFNILDLLVVSVSLISFGI. Residues 1017–1023 lie on the Extracellular side of the membrane; it reads QSSAINV. A helical transmembrane segment spans residues 1024–1041; the sequence is VKILRVLRVLRPLRINRA. At 1042-1060 the chain is on the cytoplasmic side; it reads KGLKHVVQCVFVAIRTIGN. Residues 1061–1080 form a helical membrane-spanning segment; that stretch reads IVIVTTLLQFMFACIGVQLF. The Extracellular segment spans residues 1081–1130; that stretch reads KGKLYTCSDSSKQTEAESKGNYITYKTGEVDHPIIQPRSWENSKFDFDNV. Residues 1118–1207 form a dihydropyridine binding region; it reads RSWENSKFDF…FQEQGEQEYK (90 aa). The segment at residues 1131–1151 is an intramembrane region (pore-forming); that stretch reads LAAMMALFTVSTFEGWPELLY. A Selectivity filter of repeat III motif is present at residues 1142–1145; sequence TFEG. Glu-1144 contributes to the Ca(2+) binding site. The Extracellular segment spans residues 1152 to 1168; sequence RSIDSHTEDKGPIYNYR. Residues 1169-1190 form a helical membrane-spanning segment; that stretch reads VEISIFFIIYIIIIAFFMMNIF. Residues 1191 to 1248 lie on the Cytoplasmic side of the membrane; sequence VGFVIVTFQEQGEQEYKNCELDKNQRQCVEYALKARPLPRYIPKNQHQYKVWYVVNST. An IV repeat occupies 1235–1508; that stretch reads NQHQYKVWYV…LFVAVIMDNF (274 aa). Residues 1249–1270 traverse the membrane as a helical segment; sequence YFEYLMFVLILLNTICLAMQHY. Topologically, residues 1271 to 1278 are extracellular; it reads GQSCLFKI. Residues 1279–1300 traverse the membrane as a helical segment; it reads AMNILNMLFTGLFTVEMILKLI. Over 1301 to 1310 the chain is Cytoplasmic; that stretch reads AFKPKHYFCD. Residues 1311 to 1330 form a helical membrane-spanning segment; the sequence is AWNTFDALIVVGSIVDIAIT. Over 1331–1353 the chain is Extracellular; sequence EVHPAEHTQCSPSMSAEENSRIS. A helical transmembrane segment spans residues 1354–1372; that stretch reads ITFFRLFRVMRLVKLLSRG. Over 1373 to 1390 the chain is Cytoplasmic; sequence EGIRTLLWTFIKSFQALP. A helical transmembrane segment spans residues 1391–1411; that stretch reads YVALLIVMLFFIYAVIGMQVF. Residues 1412 to 1433 are Extracellular-facing; it reads GKIALNDTTEINRNNNFQTFPQ. N-linked (GlcNAc...) asparagine glycosylation occurs at Asn-1417. An intramembrane region (pore-forming) is located at residues 1434 to 1452; the sequence is AVLLLFRCATGEAWQDIML. A Selectivity filter of repeat IV motif is present at residues 1443–1446; that stretch reads TGEA. Topologically, residues 1453 to 1480 are extracellular; the sequence is ACMPGKKCAPESEPSNSTEGETPCGSSF. The dihydropyridine binding stretch occupies residues 1459 to 1527; the sequence is KCAPESEPSN…LGPHHLDEFK (69 aa). An intrachain disulfide couples Cys-1460 to Cys-1476. Asn-1468 carries an N-linked (GlcNAc...) asparagine glycan. A phenylalkylamine binding region spans residues 1473–1515; the sequence is ETPCGSSFAVFYFISFYMLCAFLIINLFVAVIMDNFDYLTRDW. Residues 1481-1505 form a helical membrane-spanning segment; it reads AVFYFISFYMLCAFLIINLFVAVIM. The Cytoplasmic portion of the chain corresponds to 1506-2169; the sequence is DNFDYLTRDW…PDSRSYVSNL (664 aa). The important for interaction with STAC1, STAC2 and STAC3 stretch occupies residues 1640–1667; sequence DEVTVGKFYATFLIQEYFRKFKKRKEQG. The tract at residues 1640 to 1673 is calmodulin-binding; that stretch reads DEVTVGKFYATFLIQEYFRKFKKRKEQGLVGKPS. Residues 1646-1666 are calmodulin-binding IQ region; sequence KFYATFLIQEYFRKFKKRKEQ. An important for localization in at the junctional membrane region spans residues 1680–1699; the sequence is LQAGLRTLHDIGPEIRRAIS. Phosphoserine occurs at positions 1699 and 1720. 2 stretches are compositionally biased toward polar residues: residues 1761 to 1770 and 1780 to 1792; these read KTGNNQADTE and STFT…STGS. The segment at 1761–1793 is disordered; the sequence is KTGNNQADTESPSHEKLVDSTFTPSSYSSTGSN. Position 1927 is a phosphoserine; by PKA (Ser-1927). Residues 1970–1998 are disordered; that stretch reads RSHSPSTFPRPRPTPPVTPGSRGRPLQPI. Positions 1977-1987 are enriched in pro residues; that stretch reads FPRPRPTPPVT.

It belongs to the calcium channel alpha-1 subunit (TC 1.A.1.11) family. CACNA1C subfamily. As to quaternary structure, component of a calcium channel complex consisting of a pore-forming alpha subunit (CACNA1C) and ancillary beta, gamma and delta subunits. The channel complex contains alpha, beta, gamma and delta subunits in a 1:1:1:1 ratio, i.e. it contains only one of each type of subunit. CACNA1C channel activity is modulated by ancillary subunits, such as CACNB1, CACNB2, CACNB3, CACNA2D1 and CACNA2D4. Interacts with the gamma subunits CACNG4, CACNG6, CACNG7 and CACNG8. Interacts with CACNB1. Interacts with CACNB2. Identified in a complex with CACNA2D4 and CACNB3. Interacts with CACNB3. Interacts with CACNA2D1. Interacts with CACNA2D4. Interacts with CALM1. Interacts (via the N-terminus and the C-terminal C and IQ motifs) with CABP1; this inhibits Ca(2+)-dependent channel inactivation. The binding via the C motif is calcium independent whereas the binding via IQ requires the presence of calcium and is mutually exclusive with calmodulin binding. The binding to the cytoplasmic N-terminal domain is calcium independent but is essential for the channel modulation. Interacts (via C-terminal CDB motif) with CABP5; in a calcium-dependent manner. Interacts with CIB1; the interaction increases upon cardiomyocytes hypertrophy. Interacts with STAC2 and STAC3; this inhibits channel inactivation. Post-translationally, phosphorylation by PKA at Ser-1927 activates the channel. Elevated levels of blood glucose lead to increased phosphorylation by PKA. Is also phosphorylated in vitro by CaM-kinase II, PKC and CGPK. Detected in hippocampus and brain cortex, on neuronal cell bodies and dendrites, and in post-synaptic density in brain (at protein level). Isoforms 4 and 5 are expressed throughout the central nervous system, with highest levels in the olfactory bulb and cerebellum. Also expressed in heart, pituitary, adrenal gland, liver, kidney, and in a much lesser extent in testes and spleen.

The protein localises to the cell membrane. It is found in the sarcolemma. It localises to the perikaryon. The protein resides in the postsynaptic density membrane. Its subcellular location is the cell projection. The protein localises to the dendrite. It is found in the T-tubule. The catalysed reaction is Ca(2+)(in) = Ca(2+)(out). With respect to regulation, inhibited by dihydropyridines (DHP), such as isradipine. Inhibited by nifedipine. Channel activity is regulated by Ca(2+) and calmodulin. Binding of STAC1, STAC2 or STAC3 to a region that overlaps with the calmodulin binding site inhibits channel inactivation by Ca(2+) and calmodulin. Binding of calmodulin or CABP1 at the same regulatory sites results in opposite effects on the channel function. Shear stress and pressure increases calcium channel activity. In terms of biological role, pore-forming, alpha-1C subunit of the voltage-gated calcium channel that gives rise to L-type calcium currents. Mediates influx of calcium ions into the cytoplasm, and thereby triggers calcium release from the sarcoplasm. Plays an important role in excitation-contraction coupling in the heart. Required for normal heart development and normal regulation of heart rhythm. Required for normal contraction of smooth muscle cells in blood vessels and in the intestine. Essential for normal blood pressure regulation via its role in the contraction of arterial smooth muscle cells. Long-lasting (L-type) calcium channels belong to the 'high-voltage activated' (HVA) group. In Rattus norvegicus (Rat), this protein is Voltage-dependent L-type calcium channel subunit alpha-1C (Cacna1c).